Consider the following 1398-residue polypeptide: Protein timeless (1398 aa).

Residues 237 to 268 (VSTLQKLLSLWFEASLSESSEDNESNTSPPKQ) are necessary for normal circadian rhythm. Disordered stretches follow at residues 254–300 (ESSE…GGMR), 322–452 (ARVP…QKFN), 478–555 (TKGK…LRRK), 1127–1147 (TASS…SSVS), and 1220–1239 (NHRT…SSTT). A compositionally biased stretch (low complexity) spans 273-290 (SSPMLTSDPTSDSSDNGS). Residues 291 to 300 (NGRGMGGGMR) are compositionally biased toward gly residues. Residues 338 to 355 (MTGNDSEQPGSPEQSQPA) show a composition bias toward polar residues. Residues 365–375 (EDQRHRQLNEH) are compositionally biased toward basic and acidic residues. The segment covering 376–390 (GEEDEDEDEVEEEEY) has biased composition (acidic residues). Composition is skewed to polar residues over residues 400–421 (LNLT…SSAP), 440–452 (ASTS…QKFN), and 504–515 (QVENQESISTSS). Residues 522-531 (QGKPQHQKPP) are compositionally biased toward low complexity. A Nuclear localization signal motif is present at residues 550–560 (KELRRKKLVKR).

This sequence belongs to the timeless family. Forms a heterodimer with period (PER); the complex then translocates into the nucleus. Post-translationally, phosphorylated with a circadian rhythmicity. Expressed in head, photoreceptors, lateral neurons and glial cells in the lamina and medulla of the optic lobes. Expression follows a light-dark cycle, levels show a significant decrease at the end of the night and then remain low throughout the light period (at protein level).

The protein resides in the nucleus. It localises to the cytoplasm. Its subcellular location is the perinuclear region. In terms of biological role, required for the production of circadian rhythms. The biological cycle depends on the rhythmic formation and nuclear localization of the TIM-PER complex. Light induces the degradation of TIM, which promotes elimination of PER. Nuclear activity of the heterodimer coordinatively regulates PER and TIM transcription through a negative feedback loop. Behaves as a negative element in circadian transcriptional loop. Does not appear to bind DNA, suggesting indirect transcriptional inhibition. This chain is Protein timeless (tim), found in Drosophila melanogaster (Fruit fly).